A 253-amino-acid chain; its full sequence is Ubiquinone/menaquinone biosynthesis C-methyltransferase UbiE (253 aa).

Residues threonine 76, aspartate 97, 125 to 126 (NA), and serine 142 contribute to the S-adenosyl-L-methionine site.

This sequence belongs to the class I-like SAM-binding methyltransferase superfamily. MenG/UbiE family.

The enzyme catalyses a 2-demethylmenaquinol + S-adenosyl-L-methionine = a menaquinol + S-adenosyl-L-homocysteine + H(+). It catalyses the reaction a 2-methoxy-6-(all-trans-polyprenyl)benzene-1,4-diol + S-adenosyl-L-methionine = a 5-methoxy-2-methyl-3-(all-trans-polyprenyl)benzene-1,4-diol + S-adenosyl-L-homocysteine + H(+). Its pathway is quinol/quinone metabolism; menaquinone biosynthesis; menaquinol from 1,4-dihydroxy-2-naphthoate: step 2/2. It functions in the pathway cofactor biosynthesis; ubiquinone biosynthesis. Its function is as follows. Methyltransferase required for the conversion of demethylmenaquinol (DMKH2) to menaquinol (MKH2) and the conversion of 2-polyprenyl-6-methoxy-1,4-benzoquinol (DDMQH2) to 2-polyprenyl-3-methyl-6-methoxy-1,4-benzoquinol (DMQH2). The sequence is that of Ubiquinone/menaquinone biosynthesis C-methyltransferase UbiE from Xanthomonas oryzae pv. oryzae (strain MAFF 311018).